Here is a 278-residue protein sequence, read N- to C-terminus: Ribosomal RNA small subunit methyltransferase A (278 aa).

Asparagine 28, leucine 30, glycine 55, glutamate 77, aspartate 103, and asparagine 122 together coordinate S-adenosyl-L-methionine.

Belongs to the class I-like SAM-binding methyltransferase superfamily. rRNA adenine N(6)-methyltransferase family. RsmA subfamily.

The protein localises to the cytoplasm. The catalysed reaction is adenosine(1518)/adenosine(1519) in 16S rRNA + 4 S-adenosyl-L-methionine = N(6)-dimethyladenosine(1518)/N(6)-dimethyladenosine(1519) in 16S rRNA + 4 S-adenosyl-L-homocysteine + 4 H(+). Specifically dimethylates two adjacent adenosines (A1518 and A1519) in the loop of a conserved hairpin near the 3'-end of 16S rRNA in the 30S particle. May play a critical role in biogenesis of 30S subunits. The protein is Ribosomal RNA small subunit methyltransferase A of Cereibacter sphaeroides (strain ATCC 17023 / DSM 158 / JCM 6121 / CCUG 31486 / LMG 2827 / NBRC 12203 / NCIMB 8253 / ATH 2.4.1.) (Rhodobacter sphaeroides).